A 218-amino-acid polypeptide reads, in one-letter code: Adenylate kinase (218 aa).

10–15 is a binding site for ATP; sequence GAGKGT. Residues 30-59 are NMP; the sequence is STGDMLRAAVKAGTPLGLEAKKVMDAGGLV. AMP is bound by residues Thr31, Arg36, 57 to 59, 85 to 88, and Gln92; these read GLV and GFPR. The segment at 122 to 159 is LID; it reads GRRVHPASGRVYHTKYNPPKVEGKDDETGDELVQRDDD. ATP is bound by residues Arg123 and 132-133; that span reads VY. The interval 139–160 is disordered; the sequence is PPKVEGKDDETGDELVQRDDDQ. AMP contacts are provided by Arg156 and Arg167. Gly203 serves as a coordination point for ATP.

Belongs to the adenylate kinase family. Monomer.

The protein resides in the cytoplasm. The enzyme catalyses AMP + ATP = 2 ADP. It functions in the pathway purine metabolism; AMP biosynthesis via salvage pathway; AMP from ADP: step 1/1. Functionally, catalyzes the reversible transfer of the terminal phosphate group between ATP and AMP. Plays an important role in cellular energy homeostasis and in adenine nucleotide metabolism. This is Adenylate kinase from Alcanivorax borkumensis (strain ATCC 700651 / DSM 11573 / NCIMB 13689 / SK2).